Reading from the N-terminus, the 205-residue chain is Outer-membrane lipoprotein LolB (205 aa).

The signal sequence occupies residues 1–17; it reads MFLRHFIVFSFIALLAG. Cys18 carries the N-palmitoyl cysteine lipid modification. Cys18 is lipidated: S-diacylglycerol cysteine.

Belongs to the LolB family. Monomer.

The protein localises to the cell outer membrane. Plays a critical role in the incorporation of lipoproteins in the outer membrane after they are released by the LolA protein. In Pseudomonas fluorescens (strain ATCC BAA-477 / NRRL B-23932 / Pf-5), this protein is Outer-membrane lipoprotein LolB.